The following is a 180-amino-acid chain: Prothoracicotropic hormone (180 aa).

A signal peptide spans 1–15 (MKLLILCVMVHGLLA). A propeptide spanning residues 16-64 (EGPGQVLWKEQVVAPEFLLDDREDIASNRNAFFYEDKRSFRPEGLGEQV) is cleaved from the precursor. Intrachain disulfides connect cysteine 88-cysteine 123 and cysteine 111-cysteine 175.

As to quaternary structure, homodimer; disulfide-linked.

The protein resides in the secreted. Functionally, PTTH is a brain secretory polypeptide of insects which stimulates the prothoracic glands to produce and release ecdysone, the steroid essential to insect development. The chain is Prothoracicotropic hormone from Camponotus floridanus (Florida carpenter ant).